The following is a 204-amino-acid chain: Glycerol-3-phosphate acyltransferase (204 aa).

Transmembrane regions (helical) follow at residues 8 to 28 (MLVF…CYIF), 53 to 73 (VPAI…VVLA), 81 to 101 (FITA…IFFG), 116 to 136 (FGFS…VAVI), and 155 to 175 (VIFT…IIIL).

This sequence belongs to the PlsY family. In terms of assembly, probably interacts with PlsX.

Its subcellular location is the cell inner membrane. It carries out the reaction an acyl phosphate + sn-glycerol 3-phosphate = a 1-acyl-sn-glycero-3-phosphate + phosphate. Its pathway is lipid metabolism; phospholipid metabolism. Its function is as follows. Catalyzes the transfer of an acyl group from acyl-phosphate (acyl-PO(4)) to glycerol-3-phosphate (G3P) to form lysophosphatidic acid (LPA). This enzyme utilizes acyl-phosphate as fatty acyl donor, but not acyl-CoA or acyl-ACP. The sequence is that of Glycerol-3-phosphate acyltransferase from Francisella philomiragia subsp. philomiragia (strain ATCC 25017 / CCUG 19701 / FSC 153 / O#319-036).